Here is a 232-residue protein sequence, read N- to C-terminus: dTTP/UTP pyrophosphatase (232 aa).

The active-site Proton acceptor is Asp-103.

The protein belongs to the Maf family. YhdE subfamily. The cofactor is a divalent metal cation.

It localises to the cytoplasm. The catalysed reaction is dTTP + H2O = dTMP + diphosphate + H(+). It catalyses the reaction UTP + H2O = UMP + diphosphate + H(+). It carries out the reaction 5-methyl-UTP + H2O = 5-methyl-UMP + diphosphate + H(+). The enzyme catalyses psi-UTP + H2O = psi-UMP + diphosphate + H(+). Its function is as follows. Nucleoside triphosphate pyrophosphatase that hydrolyzes dTTP and UTP. Can also hydrolyze the modified nucleotides 5-methyl-UTP (m(5)UTP) and pseudo-UTP. Has weak activity with CTP. May have a dual role in cell division arrest and in preventing the incorporation of modified nucleotides into cellular nucleic acids. This Saccharomyces cerevisiae (strain ATCC 204508 / S288c) (Baker's yeast) protein is dTTP/UTP pyrophosphatase.